Here is a 21-residue protein sequence, read N- to C-terminus: Bibrotoxin (21 aa).

2 cysteine pairs are disulfide-bonded: Cys1–Cys15 and Cys3–Cys11.

The protein belongs to the endothelin/sarafotoxin family. Expressed by the venom gland.

The protein resides in the secreted. Its function is as follows. Vasoconstrictor activity. These toxins cause cardiac arrest probably as a result of coronary vasospasm. May act by displaying agonistic activities towards endothelin-1 and -2 receptors (EDNRA and EDNRB). This Atractaspis bibronii (Bibron's mole viper) protein is Bibrotoxin.